We begin with the raw amino-acid sequence, 315 residues long: Porphobilinogen deaminase (315 aa).

At Cys-245 the chain carries S-(dipyrrolylmethanemethyl)cysteine.

The protein belongs to the HMBS family. In terms of assembly, monomer. Dipyrromethane is required as a cofactor.

It catalyses the reaction 4 porphobilinogen + H2O = hydroxymethylbilane + 4 NH4(+). It participates in porphyrin-containing compound metabolism; protoporphyrin-IX biosynthesis; coproporphyrinogen-III from 5-aminolevulinate: step 2/4. The protein operates within porphyrin-containing compound metabolism; chlorophyll biosynthesis. In terms of biological role, tetrapolymerization of the monopyrrole PBG into the hydroxymethylbilane pre-uroporphyrinogen in several discrete steps. This Prochlorococcus marinus (strain NATL1A) protein is Porphobilinogen deaminase.